A 791-amino-acid polypeptide reads, in one-letter code: Subtilisin-like protease SBT5.6 (791 aa).

An N-terminal signal peptide occupies residues 1–20 (MKKLTSLFPLLFLIPLLASC). Residues 21–108 (AEEKQVYIVY…KSHPRKYEAH (88 aa)) constitute a propeptide, activation peptide. One can recognise an Inhibitor I9 domain in the interval 26 to 104 (VYIVYFGEHK…VSVFKSHPRK (79 aa)). One can recognise a Peptidase S8 domain in the interval 134-645 (ADDRFRVGRN…SGHFRPTKAA (512 aa)). The active-site Charge relay system is the aspartate 160. N-linked (GlcNAc...) asparagine glycans are attached at residues asparagine 193 and asparagine 219. Histidine 235 (charge relay system) is an active-site residue. The PA domain maps to 400 to 494 (FAPLVYASNV…VTPTVVDKIL (95 aa)). A glycan (N-linked (GlcNAc...) asparagine) is linked at asparagine 417. Serine 578 (charge relay system) is an active-site residue. 3 N-linked (GlcNAc...) asparagine glycosylation sites follow: asparagine 666, asparagine 713, and asparagine 761.

It belongs to the peptidase S8 family.

Its subcellular location is the secreted. This chain is Subtilisin-like protease SBT5.6, found in Arabidopsis thaliana (Mouse-ear cress).